A 343-amino-acid polypeptide reads, in one-letter code: L-threonine 3-dehydrogenase (343 aa).

Position 40 (Cys40) interacts with Zn(2+). Catalysis depends on charge relay system residues Thr42 and His45. Zn(2+) is bound by residues His65, Glu66, Cys95, Cys98, Cys101, and Cys109. NAD(+) contacts are provided by residues Ile177, Asp197, Arg202, 264 to 266 (LGI), and 288 to 289 (IY).

Belongs to the zinc-containing alcohol dehydrogenase family. In terms of assembly, homotetramer. The cofactor is Zn(2+).

Its subcellular location is the cytoplasm. The catalysed reaction is L-threonine + NAD(+) = (2S)-2-amino-3-oxobutanoate + NADH + H(+). It functions in the pathway amino-acid degradation; L-threonine degradation via oxydo-reductase pathway; glycine from L-threonine: step 1/2. In terms of biological role, catalyzes the NAD(+)-dependent oxidation of L-threonine to 2-amino-3-ketobutyrate. The chain is L-threonine 3-dehydrogenase from Vibrio vulnificus (strain YJ016).